Consider the following 394-residue polypeptide: ATP phosphoribosyltransferase regulatory subunit (394 aa).

The protein belongs to the class-II aminoacyl-tRNA synthetase family. HisZ subfamily. As to quaternary structure, heteromultimer composed of HisG and HisZ subunits.

The protein resides in the cytoplasm. It functions in the pathway amino-acid biosynthesis; L-histidine biosynthesis; L-histidine from 5-phospho-alpha-D-ribose 1-diphosphate: step 1/9. Functionally, required for the first step of histidine biosynthesis. May allow the feedback regulation of ATP phosphoribosyltransferase activity by histidine. In Geobacillus kaustophilus (strain HTA426), this protein is ATP phosphoribosyltransferase regulatory subunit.